Reading from the N-terminus, the 192-residue chain is dCTP deaminase, dUMP-forming (192 aa).

DCTP contacts are provided by residues 101–106 (KSSLGR), aspartate 119, 127–129 (TLE), glutamine 148, tyrosine 162, and glutamine 174. Residue glutamate 129 is the Proton donor/acceptor of the active site. The interval 162–192 (YGSGADGSRYQGQRGPTASRSHVKFHRTHVE) is disordered. Positions 171–181 (YQGQRGPTASR) are enriched in polar residues. Basic residues predominate over residues 182 to 192 (SHVKFHRTHVE).

Belongs to the dCTP deaminase family. In terms of assembly, homotrimer.

The enzyme catalyses dCTP + 2 H2O = dUMP + NH4(+) + diphosphate. Its pathway is pyrimidine metabolism; dUMP biosynthesis; dUMP from dCTP: step 1/1. Functionally, bifunctional enzyme that catalyzes both the deamination of dCTP to dUTP and the hydrolysis of dUTP to dUMP without releasing the toxic dUTP intermediate. The chain is dCTP deaminase, dUMP-forming from Beutenbergia cavernae (strain ATCC BAA-8 / DSM 12333 / CCUG 43141 / JCM 11478 / NBRC 16432 / NCIMB 13614 / HKI 0122).